The chain runs to 494 residues: Acetyl-coenzyme A carboxylase carboxyl transferase subunit beta, chloroplastic (494 aa).

Residues 226-494 (LWVQCENCYG…VPLNQNETEH (269 aa)) enclose the CoA carboxyltransferase N-terminal domain. Zn(2+) is bound by residues Cys-230, Cys-233, Cys-249, and Cys-252. A C4-type zinc finger spans residues 230–252 (CENCYGLNYKKFLKSKMNICEQC).

Belongs to the AccD/PCCB family. In terms of assembly, acetyl-CoA carboxylase is a heterohexamer composed of biotin carboxyl carrier protein, biotin carboxylase and 2 subunits each of ACCase subunit alpha and ACCase plastid-coded subunit beta (accD). Zn(2+) serves as cofactor.

It is found in the plastid. The protein resides in the chloroplast stroma. The catalysed reaction is N(6)-carboxybiotinyl-L-lysyl-[protein] + acetyl-CoA = N(6)-biotinyl-L-lysyl-[protein] + malonyl-CoA. The protein operates within lipid metabolism; malonyl-CoA biosynthesis; malonyl-CoA from acetyl-CoA: step 1/1. Functionally, component of the acetyl coenzyme A carboxylase (ACC) complex. Biotin carboxylase (BC) catalyzes the carboxylation of biotin on its carrier protein (BCCP) and then the CO(2) group is transferred by the transcarboxylase to acetyl-CoA to form malonyl-CoA. The sequence is that of Acetyl-coenzyme A carboxylase carboxyl transferase subunit beta, chloroplastic from Coffea arabica (Arabian coffee).